The sequence spans 388 residues: MGILGLSKLIADLAPLAIRESEIKNFFGRKVAIDASMCLYQFLIAVRSEGAQLATVNGDPTSHLMGMFYRTIRLLDNGIKPVYVFDGKPPDLKAGELAKRAERREEAEKALKVATDAGDEAEIEKFNRRLVRVTKEHSNEAKELLKLMGVPYVDAPCEAEAQCAALVKAGKVYATATEDMDALTFGSCKLLRYLTYSEARKMPVKEFSYDKVLQGLELTSKEFIDLCILMGCDYCDSIKGIGPKRAIELIKTYRDIETILENIDTSKYIVPENWNYQRARELFVEPEVTDASTIDLKWTAPDEDGLVQFLCGDRQFNEERVRNGARKLLKSKQSQTQVRLDSFFKALPSSPNATAAAKRKAEEIKKSANNKKAKTSGGSGAARGRRPK.

An N-domain region spans residues 1-104 (MGILGLSKLI…GELAKRAERR (104 aa)). Asp34 lines the Mg(2+) pocket. DNA contacts are provided by Arg47 and Arg70. Mg(2+) is bound by residues Asp86, Glu158, Glu160, Asp179, and Asp181. The I-domain stretch occupies residues 122-253 (EIEKFNRRLV…KRAIELIKTY (132 aa)). Position 158 (Glu158) interacts with DNA. DNA is bound by residues Gly231 and Asp233. Residue Asp233 participates in Mg(2+) binding. The interval 336–344 (TQVRLDSFF) is interaction with PCNA. Residues 351–388 (PNATAAAKRKAEEIKKSANNKKAKTSGGSGAARGRRPK) are disordered.

The protein belongs to the XPG/RAD2 endonuclease family. FEN1 subfamily. In terms of assembly, interacts with PCNA. Three molecules of FEN1 bind to one PCNA trimer with each molecule binding to one PCNA monomer. PCNA stimulates the nuclease activity without altering cleavage specificity. Mg(2+) is required as a cofactor. Post-translationally, phosphorylated. Phosphorylation upon DNA damage induces relocalization to the nuclear plasma.

The protein resides in the nucleus. It localises to the nucleolus. It is found in the nucleoplasm. The protein localises to the mitochondrion. Functionally, structure-specific nuclease with 5'-flap endonuclease and 5'-3' exonuclease activities involved in DNA replication and repair. During DNA replication, cleaves the 5'-overhanging flap structure that is generated by displacement synthesis when DNA polymerase encounters the 5'-end of a downstream Okazaki fragment. It enters the flap from the 5'-end and then tracks to cleave the flap base, leaving a nick for ligation. Also involved in the long patch base excision repair (LP-BER) pathway, by cleaving within the apurinic/apyrimidinic (AP) site-terminated flap. Acts as a genome stabilization factor that prevents flaps from equilibrating into structures that lead to duplications and deletions. Also possesses 5'-3' exonuclease activity on nicked or gapped double-stranded DNA, and exhibits RNase H activity. Also involved in replication and repair of rDNA and in repairing mitochondrial DNA. The polypeptide is Flap endonuclease 1 (Drosophila mojavensis (Fruit fly)).